A 135-amino-acid polypeptide reads, in one-letter code: 6-pyruvoyl tetrahydrobiopterin synthase (135 aa).

Histidine 17 contributes to the Zn(2+) binding site. The active-site Proton acceptor is cysteine 36. Residues histidine 40 and histidine 42 each contribute to the Zn(2+) site. Active-site charge relay system residues include histidine 81 and glutamate 124.

This sequence belongs to the PTPS family. In terms of assembly, homohexamer formed of two homotrimers in a head to head fashion. Zn(2+) serves as cofactor.

It catalyses the reaction 7,8-dihydroneopterin 3'-triphosphate = 6-pyruvoyl-5,6,7,8-tetrahydropterin + triphosphate + H(+). It participates in cofactor biosynthesis; tetrahydrobiopterin biosynthesis; tetrahydrobiopterin from 7,8-dihydroneopterin triphosphate: step 1/3. In terms of biological role, involved in the biosynthesis of tetrahydrobiopterin, an essential cofactor of aromatic amino acid hydroxylases. Catalyzes the transformation of 7,8-dihydroneopterin triphosphate into 6-pyruvoyl tetrahydropterin. This chain is 6-pyruvoyl tetrahydrobiopterin synthase (ptsA), found in Dictyostelium discoideum (Social amoeba).